Consider the following 453-residue polypeptide: Ankyrin repeat and SOCS box protein 16 (453 aa).

7 ANK repeats span residues 56-85 (CRDP…AANM), 110-139 (KQTA…ELDA), 142-171 (GGRA…KANV), 175-204 (EGMT…SVNV), 209-238 (SEVT…DVAL), 242-279 (QGET…DPQA), and 283-312 (KRHT…SPGV). Residues 397–453 (FYSSALSMENQPRQLQHLARLAVRAQLGSHCRQAAAQLPLPPLLRDYLLLGVEGRIQ) form the SOCS box domain.

The protein belongs to the ankyrin SOCS box (ASB) family.

It participates in protein modification; protein ubiquitination. In terms of biological role, may be a substrate-recognition component of a SCF-like ECS (Elongin-Cullin-SOCS-box protein) E3 ubiquitin-protein ligase complex which mediates the ubiquitination and subsequent proteasomal degradation of target proteins. The polypeptide is Ankyrin repeat and SOCS box protein 16 (Asb16) (Mus musculus (Mouse)).